The sequence spans 112 residues: Mitochondrial import inner membrane translocase subunit TIM14-1 (112 aa).

Alanine 2 bears the N-acetylalanine mark. Residues 7–23 (AGVAVAATALAGRYGIQ) form a helical membrane-spanning segment. Residues 53–112 (EAALILGVRESVAAEKVKEAHRKVMVANHPDAGGSHFLASKINEAKDVMLGKTKNSGSAF) enclose the J domain.

This sequence belongs to the TIM14 family. Probable component of the PAM complex at least composed of a mitochondrial HSP70 protein, TIMM44 and TIMM14. The complex interacts with the TIMM23 component of the TIM17:23 complex.

It localises to the mitochondrion. Its subcellular location is the mitochondrion inner membrane. In terms of biological role, component of the PAM complex, a complex required for the translocation of transit peptide-containing proteins from the inner membrane into the mitochondrial matrix in an ATP-dependent manner. The polypeptide is Mitochondrial import inner membrane translocase subunit TIM14-1 (TIM14-1) (Arabidopsis thaliana (Mouse-ear cress)).